Here is a 369-residue protein sequence, read N- to C-terminus: 4-hydroxy-3-methylbut-2-en-1-yl diphosphate synthase (flavodoxin) (369 aa).

Cys270, Cys273, Cys305, and Glu312 together coordinate [4Fe-4S] cluster.

This sequence belongs to the IspG family. [4Fe-4S] cluster is required as a cofactor.

The catalysed reaction is (2E)-4-hydroxy-3-methylbut-2-enyl diphosphate + oxidized [flavodoxin] + H2O + 2 H(+) = 2-C-methyl-D-erythritol 2,4-cyclic diphosphate + reduced [flavodoxin]. The protein operates within isoprenoid biosynthesis; isopentenyl diphosphate biosynthesis via DXP pathway; isopentenyl diphosphate from 1-deoxy-D-xylulose 5-phosphate: step 5/6. Functionally, converts 2C-methyl-D-erythritol 2,4-cyclodiphosphate (ME-2,4cPP) into 1-hydroxy-2-methyl-2-(E)-butenyl 4-diphosphate. This is 4-hydroxy-3-methylbut-2-en-1-yl diphosphate synthase (flavodoxin) from Pseudomonas fluorescens (strain Pf0-1).